The sequence spans 64 residues: p7b (64 aa).

Residues 1–12 (MECVCVDSSWPQ) lie on the Cytoplasmic side of the membrane. A helical; Signal-anchor for type II membrane protein transmembrane segment spans residues 13-30 (WLRNLILGILISSILFIL). The Lumenal segment spans residues 31 to 64 (TKTQDTVAVYHEPSVYSIDQTQKFQKIDIHNGGK).

This sequence belongs to the gammacarmovirus double gene block protein 2 family.

Its subcellular location is the host endoplasmic reticulum membrane. In terms of biological role, required for cell-to-cell movement of virions in the host plant together with p7a. In Maize chlorotic mottle virus (isolate United States/Kansas/1987) (MCMV), this protein is p7b.